The following is a 559-amino-acid chain: Hepatocyte nuclear factor 1-alpha (559 aa).

Residues 13–44 (GPGRLSALQEQLIWALLGSGLSREVLVHALGE) form the HNF-p1 domain. The tract at residues 14-43 (PGRLSALQEQLIWALLGSGLSREVLVHALG) is dimerization. Residues 49 to 62 (RVTPGAEKGDRGDG) show a composition bias toward basic and acidic residues. The tract at residues 49 to 73 (RVTPGAEKGDRGDGESSEEGEMDFP) is disordered. One can recognise a POU-specific atypical domain in the interval 78–173 (QELEALAPEE…ISQQFTNARH (96 aa)). Interaction with DNA regions lie at residues 121–123 (QRE), 134–140 (HLSQHLN), 146–149 (KNQK), 192–195 (RFKW), 252–254 (RVY), and 259–262 (NRRK). The Nuclear localization signal signature appears at 186–194 (RKGRRNRFK). A DNA-binding region (homeobox; HNF1-type) is located at residues 188–268 (GRRNRFKWGP…NRRKEEAFRH (81 aa)). The interval 492-559 (TDPEEQTDQP…IPAQMVSTAQ (68 aa)) is disordered. Residues 499–522 (DQPIQEDSLHLQSPSPVPVSSGNL) are compositionally biased toward polar residues.

It belongs to the HNF1 homeobox family. As to quaternary structure, binds DNA as a dimer. Expressed in liver, intestine, spleen and kidney.

Its subcellular location is the nucleus. Transcriptional activator that regulates the tissue specific expression of multiple genes, especially in pancreas and liver. Binds to the promoter of the albumin gene. This chain is Hepatocyte nuclear factor 1-alpha (hnf1a), found in Salmo salar (Atlantic salmon).